Here is a 153-residue protein sequence, read N- to C-terminus: 6,7-dimethyl-8-ribityllumazine synthase (153 aa).

Residues Phe22, 56–58, and 80–82 contribute to the 5-amino-6-(D-ribitylamino)uracil site; these read AFE and AVI. Residue 85 to 86 participates in (2S)-2-hydroxy-3-oxobutyl phosphate binding; the sequence is ST. His88 functions as the Proton donor in the catalytic mechanism. Phe113 contributes to the 5-amino-6-(D-ribitylamino)uracil binding site. (2S)-2-hydroxy-3-oxobutyl phosphate is bound at residue Arg127.

Belongs to the DMRL synthase family.

It carries out the reaction (2S)-2-hydroxy-3-oxobutyl phosphate + 5-amino-6-(D-ribitylamino)uracil = 6,7-dimethyl-8-(1-D-ribityl)lumazine + phosphate + 2 H2O + H(+). It functions in the pathway cofactor biosynthesis; riboflavin biosynthesis; riboflavin from 2-hydroxy-3-oxobutyl phosphate and 5-amino-6-(D-ribitylamino)uracil: step 1/2. Its function is as follows. Catalyzes the formation of 6,7-dimethyl-8-ribityllumazine by condensation of 5-amino-6-(D-ribitylamino)uracil with 3,4-dihydroxy-2-butanone 4-phosphate. This is the penultimate step in the biosynthesis of riboflavin. In Fusobacterium nucleatum subsp. nucleatum (strain ATCC 25586 / DSM 15643 / BCRC 10681 / CIP 101130 / JCM 8532 / KCTC 2640 / LMG 13131 / VPI 4355), this protein is 6,7-dimethyl-8-ribityllumazine synthase.